Here is a 156-residue protein sequence, read N- to C-terminus: MNFNATFIGQMVAFAIFIYLTYRYVWPPIVAAMAERSKRIADGLQAADRAEKDLELAQKKVVEQLTSAKKEAAAIIDQANKRAIEIVEEAKLKAQQEAERVKASAQAEIELATSRAKEELRSKVVVLALAGAEKILESSIDQNAHNELVNKLAAEL.

Residues 7-26 traverse the membrane as a helical segment; it reads FIGQMVAFAIFIYLTYRYVW.

It belongs to the ATPase B chain family. In terms of assembly, F-type ATPases have 2 components, F(1) - the catalytic core - and F(0) - the membrane proton channel. F(1) has five subunits: alpha(3), beta(3), gamma(1), delta(1), epsilon(1). F(0) has three main subunits: a(1), b(2) and c(10-14). The alpha and beta chains form an alternating ring which encloses part of the gamma chain. F(1) is attached to F(0) by a central stalk formed by the gamma and epsilon chains, while a peripheral stalk is formed by the delta and b chains.

The protein resides in the cell inner membrane. F(1)F(0) ATP synthase produces ATP from ADP in the presence of a proton or sodium gradient. F-type ATPases consist of two structural domains, F(1) containing the extramembraneous catalytic core and F(0) containing the membrane proton channel, linked together by a central stalk and a peripheral stalk. During catalysis, ATP synthesis in the catalytic domain of F(1) is coupled via a rotary mechanism of the central stalk subunits to proton translocation. In terms of biological role, component of the F(0) channel, it forms part of the peripheral stalk, linking F(1) to F(0). The sequence is that of ATP synthase subunit b from Cellvibrio japonicus (strain Ueda107) (Pseudomonas fluorescens subsp. cellulosa).